The following is an 813-amino-acid chain: Disintegrin and metalloproteinase domain-containing protein 33 (813 aa).

The signal sequence occupies residues 1–29 (MGWRPRRARGTPLLLLLLLLLLWPVPGAG). Residues 30–203 (VLQGHIPGQP…PGGPQSRGRR (174 aa)) constitute a propeptide that is removed on maturation. Residues 30–701 (VLQGHIPGQP…GPVQAENHDT (672 aa)) lie on the Extracellular side of the membrane. A glycan (N-linked (GlcNAc...) asparagine) is linked at Asn-109. Positions 131–138 (CTCSGMSG) match the Cysteine switch motif. Cys-133 is a binding site for Zn(2+). A glycan (N-linked (GlcNAc...) asparagine) is linked at Asn-145. The tract at residues 184–205 (PGNKAGMTSLPGGPQSRGRREA) is disordered. Positions 210 to 409 (KYLELYIVAD…GGGACLSNAP (200 aa)) constitute a Peptidase M12B domain. Residues Asn-231 and Asn-276 are each glycosylated (N-linked (GlcNAc...) asparagine). Disulfide bonds link Cys-320–Cys-404, Cys-360–Cys-388, and Cys-361–Cys-371. His-345 contacts Zn(2+). Glu-346 is an active-site residue. The Zn(2+) site is built by His-349 and His-355. A Disintegrin domain is found at 417–503 (PALCGNGFVE…HCPPDVYLLD (87 aa)). An N-linked (GlcNAc...) asparagine glycan is attached at Asn-448. Cystine bridges form between Cys-475/Cys-495, Cys-653/Cys-663, Cys-657/Cys-669, and Cys-671/Cys-680. The EGF-like domain maps to 649–681 (ELQRCLTACHSHGVCNSNHNCHCAPGWAPPFCD). Residues 702-722 (FLLAMLLSVLLPLLPGAGLAW) form a helical membrane-spanning segment. The Cytoplasmic segment spans residues 723-813 (CCYRLPGAHL…QVQMPRSCLW (91 aa)). Positions 746–813 (SGPKDGPHRD…QVQMPRSCLW (68 aa)) are disordered. Positions 780–791 (ENSHEPSSHPEK) are enriched in basic and acidic residues.

Zn(2+) is required as a cofactor. Post-translationally, the precursor is cleaved by a furin endopeptidase. As to expression, expressed in all tissues, except liver, with high expression in placenta, lung, spleen and veins.

The protein localises to the membrane. In Homo sapiens (Human), this protein is Disintegrin and metalloproteinase domain-containing protein 33 (ADAM33).